Here is a 409-residue protein sequence, read N- to C-terminus: Argininosuccinate synthase (409 aa).

Residue 9 to 17 (AYSGGLDTS) coordinates ATP. Tyr86 is a binding site for L-citrulline. Residue Gly116 participates in ATP binding. 3 residues coordinate L-aspartate: Thr118, Asn122, and Asp123. Asn122 provides a ligand contact to L-citrulline. 5 residues coordinate L-citrulline: Arg126, Ser174, Ser183, Glu259, and Tyr271.

It belongs to the argininosuccinate synthase family. Type 1 subfamily. Homotetramer.

The protein localises to the cytoplasm. It carries out the reaction L-citrulline + L-aspartate + ATP = 2-(N(omega)-L-arginino)succinate + AMP + diphosphate + H(+). The protein operates within amino-acid biosynthesis; L-arginine biosynthesis; L-arginine from L-ornithine and carbamoyl phosphate: step 2/3. This is Argininosuccinate synthase from Halalkalibacterium halodurans (strain ATCC BAA-125 / DSM 18197 / FERM 7344 / JCM 9153 / C-125) (Bacillus halodurans).